A 298-amino-acid chain; its full sequence is ATP synthase gamma chain (298 aa).

Belongs to the ATPase gamma chain family. As to quaternary structure, F-type ATPases have 2 components, CF(1) - the catalytic core - and CF(0) - the membrane proton channel. CF(1) has five subunits: alpha(3), beta(3), gamma(1), delta(1), epsilon(1). CF(0) has three main subunits: a, b and c.

The protein localises to the cell inner membrane. Its function is as follows. Produces ATP from ADP in the presence of a proton gradient across the membrane. The gamma chain is believed to be important in regulating ATPase activity and the flow of protons through the CF(0) complex. The protein is ATP synthase gamma chain of Albidiferax ferrireducens (strain ATCC BAA-621 / DSM 15236 / T118) (Rhodoferax ferrireducens).